The chain runs to 294 residues: HTH-type transcriptional regulator DgdR (294 aa).

The 57-residue stretch at 14-70 (LEIDLLRSFVVIAEVRALSRAAARVGRTQSALSQQMKRLEDIVDQPLFQRTGRGVVL) folds into the HTH lysR-type domain. Positions 31 to 50 (LSRAAARVGRTQSALSQQMK) form a DNA-binding region, H-T-H motif.

Belongs to the LysR transcriptional regulatory family.

This Burkholderia cepacia (Pseudomonas cepacia) protein is HTH-type transcriptional regulator DgdR (dgdR).